A 317-amino-acid chain; its full sequence is 4-hydroxy-3-methylbut-2-enyl diphosphate reductase (317 aa).

Cysteine 12 serves as a coordination point for [4Fe-4S] cluster. The (2E)-4-hydroxy-3-methylbut-2-enyl diphosphate site is built by histidine 41 and histidine 74. Residues histidine 41 and histidine 74 each contribute to the dimethylallyl diphosphate site. Isopentenyl diphosphate-binding residues include histidine 41 and histidine 74. Cysteine 97 contacts [4Fe-4S] cluster. Histidine 125 is a binding site for (2E)-4-hydroxy-3-methylbut-2-enyl diphosphate. Histidine 125 serves as a coordination point for dimethylallyl diphosphate. Residue histidine 125 coordinates isopentenyl diphosphate. The active-site Proton donor is the glutamate 127. Threonine 168 serves as a coordination point for (2E)-4-hydroxy-3-methylbut-2-enyl diphosphate. Residue cysteine 198 participates in [4Fe-4S] cluster binding. The (2E)-4-hydroxy-3-methylbut-2-enyl diphosphate site is built by serine 226, serine 227, asparagine 228, and serine 270. Serine 226, serine 227, asparagine 228, and serine 270 together coordinate dimethylallyl diphosphate. Residues serine 226, serine 227, asparagine 228, and serine 270 each coordinate isopentenyl diphosphate.

This sequence belongs to the IspH family. Homodimer. It depends on [4Fe-4S] cluster as a cofactor.

The catalysed reaction is isopentenyl diphosphate + 2 oxidized [2Fe-2S]-[ferredoxin] + H2O = (2E)-4-hydroxy-3-methylbut-2-enyl diphosphate + 2 reduced [2Fe-2S]-[ferredoxin] + 2 H(+). It catalyses the reaction dimethylallyl diphosphate + 2 oxidized [2Fe-2S]-[ferredoxin] + H2O = (2E)-4-hydroxy-3-methylbut-2-enyl diphosphate + 2 reduced [2Fe-2S]-[ferredoxin] + 2 H(+). It participates in isoprenoid biosynthesis; dimethylallyl diphosphate biosynthesis; dimethylallyl diphosphate from (2E)-4-hydroxy-3-methylbutenyl diphosphate: step 1/1. Its pathway is isoprenoid biosynthesis; isopentenyl diphosphate biosynthesis via DXP pathway; isopentenyl diphosphate from 1-deoxy-D-xylulose 5-phosphate: step 6/6. Its function is as follows. Catalyzes the conversion of 1-hydroxy-2-methyl-2-(E)-butenyl 4-diphosphate (HMBPP) into a mixture of isopentenyl diphosphate (IPP) and dimethylallyl diphosphate (DMAPP). Acts in the terminal step of the DOXP/MEP pathway for isoprenoid precursor biosynthesis. This chain is 4-hydroxy-3-methylbut-2-enyl diphosphate reductase, found in Yersinia pseudotuberculosis serotype O:1b (strain IP 31758).